We begin with the raw amino-acid sequence, 295 residues long: 5'-adenylylsulfate reductase-like 6 (295 aa).

The first 22 residues, 1–22, serve as a signal peptide directing secretion; it reads MEKKLTLLLLVVVVLFVNLTNA. Residues 23–161 form the Thioredoxin domain; it reads TVRVQICPRE…LVAFYTDVTG (139 aa). The N-linked (GlcNAc...) asparagine glycan is linked to Asn-136. A helical membrane pass occupies residues 208 to 228; it reads ATVFVLLRLLHLISPTMVVFV.

Its subcellular location is the membrane. The protein is 5'-adenylylsulfate reductase-like 6 (APRL6) of Arabidopsis thaliana (Mouse-ear cress).